The primary structure comprises 407 residues: Tyrosine--tRNA ligase (407 aa).

Y36 contributes to the L-tyrosine binding site. Positions 41–50 match the 'HIGH' region motif; sequence PTADSLHIGH. 2 residues coordinate L-tyrosine: Y169 and Q173. Residues 229-233 carry the 'KMSKS' region motif; sequence KMGKT. K232 serves as a coordination point for ATP. Positions 341-407 constitute an S4 RNA-binding domain; that stretch reads KGILDILVET…KKSYNRIVIE (67 aa).

The protein belongs to the class-I aminoacyl-tRNA synthetase family. TyrS type 1 subfamily. Homodimer.

It localises to the cytoplasm. The catalysed reaction is tRNA(Tyr) + L-tyrosine + ATP = L-tyrosyl-tRNA(Tyr) + AMP + diphosphate + H(+). Its function is as follows. Catalyzes the attachment of tyrosine to tRNA(Tyr) in a two-step reaction: tyrosine is first activated by ATP to form Tyr-AMP and then transferred to the acceptor end of tRNA(Tyr). The sequence is that of Tyrosine--tRNA ligase from Clostridium tetani (strain Massachusetts / E88).